The sequence spans 174 residues: Rubredoxin-2 (174 aa).

In terms of domain architecture, Rubredoxin-like 1 spans 1–53; sequence MAKYQCPDCEYIYDEVAGHPHEGFPPGTSWETIPEEWACPDCAVRDKADFVVI. Fe cation is bound by residues cysteine 6, cysteine 9, cysteine 39, and cysteine 42. Positions 56–65 are enriched in low complexity; sequence GSASPASGAA. Residues 56–115 form a disordered region; sequence GSASPASGAATPEVRTATTPPKAEASPQKSTGASTPSANNKAKAKAKAKPARAKSSKDST. A compositionally biased stretch (basic residues) spans 97 to 109; it reads AKAKAKAKPARAK. In terms of domain architecture, Rubredoxin-like 2 spans 121 to 172; it reads FRKWICITCGHIYDEALGDETEGFAPGTLFEDIPDDWCCPDCGATKEDYVLH. The Fe cation site is built by cysteine 126, cysteine 129, cysteine 159, and cysteine 162.

The protein belongs to the rubredoxin family. Fe(3+) is required as a cofactor.

Its subcellular location is the cytoplasm. The protein operates within hydrocarbon metabolism; alkane degradation. Its function is as follows. Involved in the hydrocarbon hydroxylating system, which transfers electrons from NADH to rubredoxin reductase and then through rubredoxin to alkane 1 monooxygenase. In Alcanivorax borkumensis (strain ATCC 700651 / DSM 11573 / NCIMB 13689 / SK2), this protein is Rubredoxin-2 (alkG).